A 683-amino-acid chain; its full sequence is E3 ubiquitin-protein ligase RNF103 (683 aa).

A run of 4 helical transmembrane segments spans residues 6 to 26, 326 to 346, 366 to 386, and 411 to 431; these read FFLL…EAIV, LFVL…FITQ, LLII…LDSF, and MFYT…GLLI. Residues 525-542 are compositionally biased toward acidic residues; sequence EEMSESSQDTENDSDSDN. Residues 525 to 548 form a disordered region; the sequence is EEMSESSQDTENDSDSDNMDTFSS. An RING-type zinc finger spans residues 619-661; sequence CVVCLENFENGCLLMGLPCGHVFHQNCIVMWLAGGRHCCPVCR.

Interacts with DERL1 and VCP. As to expression, highly expressed in the normal cerebellum but not in the cerebral cortex.

Its subcellular location is the endoplasmic reticulum membrane. The enzyme catalyses S-ubiquitinyl-[E2 ubiquitin-conjugating enzyme]-L-cysteine + [acceptor protein]-L-lysine = [E2 ubiquitin-conjugating enzyme]-L-cysteine + N(6)-ubiquitinyl-[acceptor protein]-L-lysine.. Its pathway is protein modification; protein ubiquitination. In terms of biological role, acts as an E2-dependent E3 ubiquitin-protein ligase, probably involved in the ER-associated protein degradation pathway. This chain is E3 ubiquitin-protein ligase RNF103 (Rnf103), found in Mus musculus (Mouse).